The primary structure comprises 211 residues: Uridine kinase (211 aa).

Residue 12–19 (GGSGSGKT) participates in ATP binding.

It belongs to the uridine kinase family.

The protein localises to the cytoplasm. It carries out the reaction uridine + ATP = UMP + ADP + H(+). It catalyses the reaction cytidine + ATP = CMP + ADP + H(+). It functions in the pathway pyrimidine metabolism; CTP biosynthesis via salvage pathway; CTP from cytidine: step 1/3. The protein operates within pyrimidine metabolism; UMP biosynthesis via salvage pathway; UMP from uridine: step 1/1. The polypeptide is Uridine kinase (Geobacillus kaustophilus (strain HTA426)).